Here is a 430-residue protein sequence, read N- to C-terminus: Aspartate aminotransferase, mitochondrial (430 aa).

The N-terminal 29 residues, 1-29 (MALLHSGRFLSGVAAAFHPGLAAAASARA), are a transit peptide targeting the mitochondrion. Threonine 48 carries the phosphothreonine modification. Lysine 59 is modified (N6-acetyllysine). Glycine 65 lines the substrate pocket. Lysine 73 bears the N6-acetyllysine; alternate mark. An N6-succinyllysine; alternate modification is found at lysine 73. Lysine 82 carries the post-translational modification N6-acetyllysine. The residue at position 90 (lysine 90) is an N6-acetyllysine; alternate. N6-succinyllysine; alternate is present on lysine 90. Position 96 is a 3'-nitrotyrosine; alternate (tyrosine 96). Phosphotyrosine; alternate is present on tyrosine 96. Residues lysine 107 and lysine 122 each carry the N6-acetyllysine; alternate modification. N6-succinyllysine; alternate occurs at positions 107 and 122. Position 143 is a phosphoserine (serine 143). Lysine 159 carries the post-translational modification N6-acetyllysine; alternate. N6-succinyllysine; alternate is present on lysine 159. A substrate-binding site is contributed by tryptophan 162. Position 185 is an N6-acetyllysine; alternate (lysine 185). Lysine 185 carries the N6-succinyllysine; alternate modification. Asparagine 215 contributes to the substrate binding site. Position 227 is an N6-succinyllysine (lysine 227). The residue at position 234 (lysine 234) is an N6-acetyllysine. Lysine 279 and lysine 296 each carry N6-acetyllysine; alternate. Lysine 279 carries the N6-(pyridoxal phosphate)lysine; alternate modification. Lysine 296 is modified (N6-succinyllysine; alternate). Lysine 302 is modified (N6-acetyllysine). N6-acetyllysine; alternate is present on lysine 309. At lysine 309 the chain carries N6-succinyllysine; alternate. Arginine 313 is subject to Asymmetric dimethylarginine. Lysine 338 carries the N6-acetyllysine; alternate modification. Position 338 is an N6-succinyllysine; alternate (lysine 338). At lysine 345 the chain carries N6-acetyllysine. Residue lysine 363 is modified to N6-acetyllysine; alternate. Residue lysine 363 is modified to N6-succinyllysine; alternate. N6-acetyllysine occurs at positions 364 and 387. N6-acetyllysine; alternate occurs at positions 396 and 404. Lysine 396 and lysine 404 each carry N6-succinyllysine; alternate. Arginine 407 provides a ligand contact to substrate.

Belongs to the class-I pyridoxal-phosphate-dependent aminotransferase family. In terms of assembly, homodimer. Pyridoxal 5'-phosphate serves as cofactor.

Its subcellular location is the mitochondrion matrix. It is found in the cell membrane. It carries out the reaction L-aspartate + 2-oxoglutarate = oxaloacetate + L-glutamate. It catalyses the reaction L-kynurenine + 2-oxoglutarate = 4-(2-aminophenyl)-2,4-dioxobutanoate + L-glutamate. Its function is as follows. Catalyzes the irreversible transamination of the L-tryptophan metabolite L-kynurenine to form kynurenic acid (KA). As a member of the malate-aspartate shuttle, it has a key role in the intracellular NAD(H) redox balance. Is important for metabolite exchange between mitochondria and cytosol, and for amino acid metabolism. Facilitates cellular uptake of long-chain free fatty acids. The sequence is that of Aspartate aminotransferase, mitochondrial (GOT2) from Bos taurus (Bovine).